A 195-amino-acid chain; its full sequence is Molybdenum cofactor guanylyltransferase (195 aa).

Residues 12 to 14, K25, N53, D70, and D100 contribute to the GTP site; that span reads LAG. D100 is a binding site for Mg(2+).

It belongs to the MobA family. As to quaternary structure, monomer. The cofactor is Mg(2+).

The protein resides in the cytoplasm. It carries out the reaction Mo-molybdopterin + GTP + H(+) = Mo-molybdopterin guanine dinucleotide + diphosphate. In terms of biological role, transfers a GMP moiety from GTP to Mo-molybdopterin (Mo-MPT) cofactor (Moco or molybdenum cofactor) to form Mo-molybdopterin guanine dinucleotide (Mo-MGD) cofactor. This chain is Molybdenum cofactor guanylyltransferase, found in Vibrio parahaemolyticus serotype O3:K6 (strain RIMD 2210633).